A 363-amino-acid chain; its full sequence is Protein RecA (363 aa).

78–85 (GPESGGKT) contributes to the ATP binding site.

The protein belongs to the RecA family.

It localises to the cytoplasm. Its function is as follows. Can catalyze the hydrolysis of ATP in the presence of single-stranded DNA, the ATP-dependent uptake of single-stranded DNA by duplex DNA, and the ATP-dependent hybridization of homologous single-stranded DNAs. It interacts with LexA causing its activation and leading to its autocatalytic cleavage. Probably involved in base excision repair. In terms of biological role, following severe irradiation (7 kGy of gamma irradiation) genomic DNA is fragmented. DNA is progressively degraded for the first 1.5 hours after IR, in a step promoted by RecA and counterbalanced by DNA Pol I and Pol III, followed by massive DNA synthesis and genome reassembly in the next hour. Optimal priming of DNA synthesis requires both RecA and RadA, Pol III initiates DNA synthesis while both Pol I and Pol III are required for its continuation. In the absence of RecA the majority of the chromosome is still reconstituted, via either single-strand annealing or non-homologous end joining. This chain is Protein RecA, found in Deinococcus radiodurans (strain ATCC 13939 / DSM 20539 / JCM 16871 / CCUG 27074 / LMG 4051 / NBRC 15346 / NCIMB 9279 / VKM B-1422 / R1).